The chain runs to 129 residues: Glycine cleavage system H protein (129 aa).

The region spanning 24-106 (TYTVGITEHA…YGQGWIFKIK (83 aa)) is the Lipoyl-binding domain. Position 65 is an N6-lipoyllysine (K65).

The protein belongs to the GcvH family. In terms of assembly, the glycine cleavage system is composed of four proteins: P, T, L and H. Requires (R)-lipoate as cofactor.

Functionally, the glycine cleavage system catalyzes the degradation of glycine. The H protein shuttles the methylamine group of glycine from the P protein to the T protein. The chain is Glycine cleavage system H protein from Cronobacter sakazakii (strain ATCC BAA-894) (Enterobacter sakazakii).